The chain runs to 427 residues: Serine--tRNA ligase (427 aa).

231–233 is an L-serine binding site; that stretch reads TAE. 262–264 is an ATP binding site; it reads RSE. Glutamate 285 contributes to the L-serine binding site. ATP is bound at residue 349-352; sequence EISS. Serine 385 contacts L-serine.

This sequence belongs to the class-II aminoacyl-tRNA synthetase family. Type-1 seryl-tRNA synthetase subfamily. In terms of assembly, homodimer. The tRNA molecule binds across the dimer.

The protein resides in the cytoplasm. The enzyme catalyses tRNA(Ser) + L-serine + ATP = L-seryl-tRNA(Ser) + AMP + diphosphate + H(+). The catalysed reaction is tRNA(Sec) + L-serine + ATP = L-seryl-tRNA(Sec) + AMP + diphosphate + H(+). The protein operates within aminoacyl-tRNA biosynthesis; selenocysteinyl-tRNA(Sec) biosynthesis; L-seryl-tRNA(Sec) from L-serine and tRNA(Sec): step 1/1. Functionally, catalyzes the attachment of serine to tRNA(Ser). Is also able to aminoacylate tRNA(Sec) with serine, to form the misacylated tRNA L-seryl-tRNA(Sec), which will be further converted into selenocysteinyl-tRNA(Sec). In Methylococcus capsulatus (strain ATCC 33009 / NCIMB 11132 / Bath), this protein is Serine--tRNA ligase.